A 372-amino-acid polypeptide reads, in one-letter code: MMMRFLSAVVIMSSAMAVGLVSAQRCGSQGGGGTCPALWCCSIWGWCGDSEPYCGRTCENKCWSGERSDHRCGAAVGNPPCGQDRCCSVHGWCGGGNDYCSGSKCQYRCSSSVRGPRVALSGNSTANSIGNVVVTEPLFDQMFSHRKDCPSQGFYSYHSFLVAAESFPAFGTIGDVATRKREVAAFLAHISQATSGERSDVENPHAWGLCHINTTTVTENDFCTSSDWPCAAGKKYSPRGPIQLTHNFNYGLAGQAIGEDLIQNPDLVEKDPIISFKTALWFWMSQHDNKPSCHDIVLNANSAANRIPNKGVIGNIISRAFGHDDFAVRSSSIGFYKRYCDMLGVSYGHDLKYWFDNTPSSEFQRIQMRVAA.

The signal sequence occupies residues 1–23 (MMMRFLSAVVIMSSAMAVGLVSA). Gln-24 provides a ligand contact to substrate. Gln-24 is subject to Pyrrolidone carboxylic acid. Chitin-binding type-1 domains lie at 24–64 (QRCG…KCWS) and 69–111 (DHRC…RCSS). Intrachain disulfides connect Cys-26-Cys-41, Cys-35-Cys-47, Cys-40-Cys-54, and Cys-58-Cys-62. 42 to 53 (SIWGWCGDSEPY) provides a ligand contact to substrate. His-70 is a binding site for Zn(2+). Disulfide bonds link Cys-72–Cys-87, Cys-81–Cys-93, Cys-86–Cys-100, and Cys-105–Cys-109. His-90 provides a ligand contact to Zn(2+). Residues 113-128 (VRGPRVALSGNSTANS) are spacer. A glycan (N-linked (GlcNAc...) asparagine) is linked at Asn-123. Positions 129 to 372 (IGNVVVTEPL…FQRIQMRVAA (244 aa)) are chitinase.

Monomer and homodimer. Zinc favors dimerization. Active in the monomeric form but probably inactive in the dimeric form. The interaction with glycans on the mammalian TCR and MHC molecules of the T-cell and antigen-presenting cell, respectively, is inhibited by oligomers of GlcNAc. Post-translationally, proteolytically processed to yield a very small protein (8.5 kDa, 86 AA) containing only the two chitin-binding domains. Rhizomes and inflorescence with immature seeds.

It carries out the reaction Random endo-hydrolysis of N-acetyl-beta-D-glucosaminide (1-&gt;4)-beta-linkages in chitin and chitodextrins.. Functions both as a chitinase and as a N-acetyl-D-glucosamine binding lectin. Inhibits the growth of several phytopathogenic chitin-containing fungi. Also possesses insecticidal activity and superantigenic properties. The chain is Lectin/endochitinase 1 (UDA1) from Urtica dioica (Great nettle).